We begin with the raw amino-acid sequence, 148 residues long: Flavodoxin (148 aa).

The Flavodoxin-like domain maps to 4–145; the sequence is VLILFGSSTG…AVSAFAEDVL (142 aa).

The protein belongs to the flavodoxin family. It depends on FMN as a cofactor.

Functionally, low-potential electron donor to a number of redox enzymes. This chain is Flavodoxin, found in Desulfovibrio desulfuricans (strain ATCC 27774 / DSM 6949 / MB).